Consider the following 382-residue polypeptide: UDP-N-acetylglucosamine--N-acetylmuramyl-(pentapeptide) pyrophosphoryl-undecaprenol N-acetylglucosamine transferase (382 aa).

UDP-N-acetyl-alpha-D-glucosamine contacts are provided by residues 17–19 (TAG), Asn137, Arg179, Ser213, and Gln308.

It belongs to the glycosyltransferase 28 family. MurG subfamily.

It is found in the cell membrane. The catalysed reaction is di-trans,octa-cis-undecaprenyl diphospho-N-acetyl-alpha-D-muramoyl-L-alanyl-D-glutamyl-meso-2,6-diaminopimeloyl-D-alanyl-D-alanine + UDP-N-acetyl-alpha-D-glucosamine = di-trans,octa-cis-undecaprenyl diphospho-[N-acetyl-alpha-D-glucosaminyl-(1-&gt;4)]-N-acetyl-alpha-D-muramoyl-L-alanyl-D-glutamyl-meso-2,6-diaminopimeloyl-D-alanyl-D-alanine + UDP + H(+). Its pathway is cell wall biogenesis; peptidoglycan biosynthesis. Functionally, cell wall formation. Catalyzes the transfer of a GlcNAc subunit on undecaprenyl-pyrophosphoryl-MurNAc-pentapeptide (lipid intermediate I) to form undecaprenyl-pyrophosphoryl-MurNAc-(pentapeptide)GlcNAc (lipid intermediate II). In Rhodococcus opacus (strain B4), this protein is UDP-N-acetylglucosamine--N-acetylmuramyl-(pentapeptide) pyrophosphoryl-undecaprenol N-acetylglucosamine transferase.